The following is a 323-amino-acid chain: tRNA dimethylallyltransferase (323 aa).

13 to 20 lines the ATP pocket; sequence GPTASGKT. Residue 15 to 20 participates in substrate binding; sequence TASGKT. 4 interaction with substrate tRNA regions span residues 42–45, 166–170, 251–256, and 284–291; these read DSAL, QRIQR, RCVGYR, and KRQITWLR.

The protein belongs to the IPP transferase family. As to quaternary structure, monomer. Mg(2+) is required as a cofactor.

The enzyme catalyses adenosine(37) in tRNA + dimethylallyl diphosphate = N(6)-dimethylallyladenosine(37) in tRNA + diphosphate. Functionally, catalyzes the transfer of a dimethylallyl group onto the adenine at position 37 in tRNAs that read codons beginning with uridine, leading to the formation of N6-(dimethylallyl)adenosine (i(6)A). The polypeptide is tRNA dimethylallyltransferase (Acidovorax ebreus (strain TPSY) (Diaphorobacter sp. (strain TPSY))).